A 197-amino-acid chain; its full sequence is Ribosome maturation factor RimM (197 aa).

Residues 99 to 174 (EDEFYQVDLI…LVVEPVAAGL (76 aa)) enclose the PRC barrel domain.

Belongs to the RimM family. Binds ribosomal protein uS19.

The protein localises to the cytoplasm. In terms of biological role, an accessory protein needed during the final step in the assembly of 30S ribosomal subunit, possibly for assembly of the head region. Essential for efficient processing of 16S rRNA. May be needed both before and after RbfA during the maturation of 16S rRNA. It has affinity for free ribosomal 30S subunits but not for 70S ribosomes. The polypeptide is Ribosome maturation factor RimM (Bartonella quintana (strain Toulouse) (Rochalimaea quintana)).